The following is a 345-amino-acid chain: Mitochondrial metalloendopeptidase OMA1 (345 aa).

Topologically, residues 1 to 67 are mitochondrial matrix; that stretch reads MLRNIIRFKG…ILLDKSSRKY (67 aa). Residues 68–88 traverse the membrane as a helical segment; the sequence is LALLFGGCSLFYYTHLDKAPV. The Mitochondrial intermembrane segment spans residues 89-345; the sequence is SDRSRFIWVS…GNYYKSFFSM (257 aa). His-203 serves as a coordination point for Zn(2+). Glu-204 is an active-site residue. Zn(2+) is bound by residues His-207 and Glu-257. The cysteines at positions 272 and 332 are disulfide-linked. The interval 314-345 is required for protease activation; sequence ENMSKWLPKANEIYEQSDCSSMGNYYKSFFSM.

This sequence belongs to the peptidase M48 family. In terms of assembly, homooligomer. The cofactor is Zn(2+). Forms a redox-dependent disulfide bond, which plays a structural role and regulates its conformational stability and activity.

It localises to the mitochondrion inner membrane. With respect to regulation, protease activity is induced in response to various mitochondrial stress, such as changes in membrane potential, oxidative stress or chronic hyperpolarization, and depends on its C-terminal region. Protease that is part of the quality control system in the inner membrane of mitochondria. Activated in response to various mitochondrial stress, leading to the proteolytic cleavage of target proteins, such as OXA1 and COX1. Cleaves and thereby promotes the turnover of mistranslated or misfolded membrane proteins. Cleaves the misfolded multi-pass membrane protein OXA1. Involved in quality control of cytochrome oxidase assembly: mediates the cleavage of COX1 in cells lacking COA2. Required for the stability of the respiratory supercomplexes. Required for TOR signaling. The chain is Mitochondrial metalloendopeptidase OMA1 from Saccharomyces cerevisiae (strain ATCC 204508 / S288c) (Baker's yeast).